The primary structure comprises 313 residues: tRNA dimethylallyltransferase (313 aa).

Residue 10–17 (GPTAVGKT) coordinates ATP. 12–17 (TAVGKT) provides a ligand contact to substrate. The interaction with substrate tRNA stretch occupies residues 35–38 (DSMQ).

Belongs to the IPP transferase family. Monomer. Requires Mg(2+) as cofactor.

The catalysed reaction is adenosine(37) in tRNA + dimethylallyl diphosphate = N(6)-dimethylallyladenosine(37) in tRNA + diphosphate. In terms of biological role, catalyzes the transfer of a dimethylallyl group onto the adenine at position 37 in tRNAs that read codons beginning with uridine, leading to the formation of N6-(dimethylallyl)adenosine (i(6)A). This is tRNA dimethylallyltransferase from Alkaliphilus oremlandii (strain OhILAs) (Clostridium oremlandii (strain OhILAs)).